Consider the following 423-residue polypeptide: Kynureninase (423 aa).

Pyridoxal 5'-phosphate contacts are provided by residues L105, S106, 133-136 (FPSD), D218, H221, and Y243. N6-(pyridoxal phosphate)lysine is present on K244. Pyridoxal 5'-phosphate is bound by residues W273 and N301.

Belongs to the kynureninase family. In terms of assembly, homodimer. It depends on pyridoxal 5'-phosphate as a cofactor.

It carries out the reaction L-kynurenine + H2O = anthranilate + L-alanine + H(+). The catalysed reaction is 3-hydroxy-L-kynurenine + H2O = 3-hydroxyanthranilate + L-alanine + H(+). It participates in amino-acid degradation; L-kynurenine degradation; L-alanine and anthranilate from L-kynurenine: step 1/1. The protein operates within cofactor biosynthesis; NAD(+) biosynthesis; quinolinate from L-kynurenine: step 2/3. Catalyzes the cleavage of L-kynurenine (L-Kyn) and L-3-hydroxykynurenine (L-3OHKyn) into anthranilic acid (AA) and 3-hydroxyanthranilic acid (3-OHAA), respectively. This Xanthomonas oryzae pv. oryzae (strain PXO99A) protein is Kynureninase.